The sequence spans 504 residues: MKLLEQIEKWAVETPDQTAFVWRDAKITYKQLKEDSDALAHWISSEYPDDRSPIMVYGHMQPEMIINFLGCVKAGHAYIPVDLSIPADRVQRIAESSGAKLLLSGAEVTVTDLPVRITSEDNLKDIFFTHKGNTPNPEHAVKGDENFYIIYTSGSTGNPKGVQITYNCLVSFTKWTVEDFNLQTGQVFLNQAPFSFDLSVMDIYPSLVTGGTLWAIDKDMIARPKDLFASLEQSDIQVWTSTPSFAEMCLMEASFSESMLPNMKTFLFCGEVLPNEVARKLIERFPKAAIMNTYGPTEATVAVTGIHVTEEVLDQYKSLPVGYCKSDCRLLIMKEDGTIAPDGEKGEIVIVGPSVSVGYLGSPELTEKVFTMIDGERAYKTGDAGYVENGLLFYNGRLDFQIKLHGYRMELEEIEHHLRACSYVEGAVVVPIKKGEKYDYLLAVVVPGEHSFEKEFKLTSAIKKELNERLPNYMIPRKFMYHSSIPMTPNGKVDRKKLLSEVTA.

Residue threonine 152–serine 153 participates in ATP binding. Aspartate 197 contributes to the D-alanine binding site. Asparagine 292–threonine 297 serves as a coordination point for ATP. Residue valine 301 coordinates D-alanine. ATP contacts are provided by residues aspartate 383, tyrosine 394–arginine 397, and lysine 492. Lysine 492 provides a ligand contact to D-alanine.

The protein belongs to the ATP-dependent AMP-binding enzyme family. DltA subfamily.

The protein localises to the cytoplasm. The enzyme catalyses holo-[D-alanyl-carrier protein] + D-alanine + ATP = D-alanyl-[D-alanyl-carrier protein] + AMP + diphosphate. It participates in cell wall biogenesis; lipoteichoic acid biosynthesis. Catalyzes the first step in the D-alanylation of lipoteichoic acid (LTA), the activation of D-alanine and its transfer onto the D-alanyl carrier protein (Dcp) DltC. In an ATP-dependent two-step reaction, forms a high energy D-alanyl-AMP intermediate, followed by transfer of the D-alanyl residue as a thiol ester to the phosphopantheinyl prosthetic group of the Dcp. D-alanylation of LTA plays an important role in modulating the properties of the cell wall in Gram-positive bacteria, influencing the net charge of the cell wall. In Bacillus mycoides (strain KBAB4) (Bacillus weihenstephanensis), this protein is D-alanine--D-alanyl carrier protein ligase.